Consider the following 234-residue polypeptide: uncharacterized protein (234 aa).

In terms of domain architecture, HTH tetR-type spans 24 to 83; the sequence is VERRNELVDGTIEAIRRHGRFLSMDEIAAEIGVSKTVLYRYFVDKNDLTTAVMMRFTQTT. Positions 46–65 form a DNA-binding region, H-T-H motif; the sequence is SMDEIAAEIGVSKTVLYRYF.

This is an uncharacterized protein from Mycobacterium tuberculosis (strain CDC 1551 / Oshkosh).